The primary structure comprises 117 residues: NADH-quinone oxidoreductase subunit A (117 aa).

3 helical membrane-spanning segments follow: residues 4–24 (WIGV…GMLT), 64–84 (LMFV…VSFV), and 86–106 (LGLA…LGLW).

It belongs to the complex I subunit 3 family. As to quaternary structure, NDH-1 is composed of 14 different subunits. Subunits NuoA, H, J, K, L, M, N constitute the membrane sector of the complex.

Its subcellular location is the cell membrane. It carries out the reaction a quinone + NADH + 5 H(+)(in) = a quinol + NAD(+) + 4 H(+)(out). Its function is as follows. NDH-1 shuttles electrons from NADH, via FMN and iron-sulfur (Fe-S) centers, to quinones in the respiratory chain. The immediate electron acceptor for the enzyme in this species is believed to be a menaquinone. Couples the redox reaction to proton translocation (for every two electrons transferred, four hydrogen ions are translocated across the cytoplasmic membrane), and thus conserves the redox energy in a proton gradient. The sequence is that of NADH-quinone oxidoreductase subunit A from Desulforamulus reducens (strain ATCC BAA-1160 / DSM 100696 / MI-1) (Desulfotomaculum reducens).